Consider the following 142-residue polypeptide: Large ribosomal subunit protein uL11 (142 aa).

Belongs to the universal ribosomal protein uL11 family. Part of the ribosomal stalk of the 50S ribosomal subunit. Interacts with L10 and the large rRNA to form the base of the stalk. L10 forms an elongated spine to which L12 dimers bind in a sequential fashion forming a multimeric L10(L12)X complex. Post-translationally, one or more lysine residues are methylated.

Forms part of the ribosomal stalk which helps the ribosome interact with GTP-bound translation factors. This chain is Large ribosomal subunit protein uL11, found in Magnetococcus marinus (strain ATCC BAA-1437 / JCM 17883 / MC-1).